The following is a 376-amino-acid chain: UDP-N-acetylenolpyruvoylglucosamine reductase (376 aa).

Positions 48–219 (VGGPARHLVI…LDVTMQFNLG (172 aa)) constitute an FAD-binding PCMH-type domain. Arg-196 is a catalytic residue. The active-site Proton donor is the Ser-274. Glu-368 is an active-site residue.

It belongs to the MurB family. FAD is required as a cofactor.

The protein resides in the cytoplasm. It catalyses the reaction UDP-N-acetyl-alpha-D-muramate + NADP(+) = UDP-N-acetyl-3-O-(1-carboxyvinyl)-alpha-D-glucosamine + NADPH + H(+). The protein operates within cell wall biogenesis; peptidoglycan biosynthesis. Cell wall formation. This Cutibacterium acnes (strain DSM 16379 / KPA171202) (Propionibacterium acnes) protein is UDP-N-acetylenolpyruvoylglucosamine reductase.